The sequence spans 146 residues: Catabolic 3-dehydroquinase (146 aa).

Tyr24 functions as the Proton acceptor in the catalytic mechanism. Substrate is bound by residues Asn78, His84, and Asp91. His104 acts as the Proton donor in catalysis. Residues 105 to 106 and Arg115 contribute to the substrate site; that span reads IT.

Belongs to the type-II 3-dehydroquinase family. Homododecamer. Adopts a ring-like structure, composed of an arrangement of two hexameric rings stacked on top of one another.

It carries out the reaction 3-dehydroquinate = 3-dehydroshikimate + H2O. Its pathway is aromatic compound metabolism; 3,4-dihydroxybenzoate biosynthesis; 3,4-dihydroxybenzoate from 3-dehydroquinate: step 1/2. In terms of biological role, is involved in the catabolism of quinate. Allows the utilization of quinate as carbon source via the beta-ketoadipate pathway. This Candida albicans (strain SC5314 / ATCC MYA-2876) (Yeast) protein is Catabolic 3-dehydroquinase.